Here is a 363-residue protein sequence, read N- to C-terminus: MTSEQALLVLGIETTCDETAAAVVERRADGSGRLLSNIVRSQTDEHAPFGGVVPEIAARAHVDVLDGIIAAAMNEAGVAFASLSGVAAAAGPGLIGGVIVGLTTAKAIALVHGTPLIAVNHLEAHALTPRLTDSVEFPYCLFLASGGHTQIVAVLGVGNYVRLGTTVDDAIGEAFDKIAKMLGLPYPGGPQVERAAEAGDPNRFAFPRPMLGRQDANFSLSGLKTAVRNEAGKLTPLDPQDINDLCAGFQAAVLESVADRLGAGLRLFKERFGPPKALVAAGGAAANQAIRRMLREVAAKVQTTLIVPPPALCTDNGAMIAWAGAERLALGLTDTMDTAPRARWLLDANATAPAKFANTRAGF.

Residues histidine 121 and histidine 125 each contribute to the Fe cation site. Residues leucine 143–glycine 147, aspartate 176, glycine 189, and asparagine 287 each bind substrate. A Fe cation-binding site is contributed by aspartate 315.

It belongs to the KAE1 / TsaD family. Fe(2+) serves as cofactor.

It is found in the cytoplasm. The enzyme catalyses L-threonylcarbamoyladenylate + adenosine(37) in tRNA = N(6)-L-threonylcarbamoyladenosine(37) in tRNA + AMP + H(+). Required for the formation of a threonylcarbamoyl group on adenosine at position 37 (t(6)A37) in tRNAs that read codons beginning with adenine. Is involved in the transfer of the threonylcarbamoyl moiety of threonylcarbamoyl-AMP (TC-AMP) to the N6 group of A37, together with TsaE and TsaB. TsaD likely plays a direct catalytic role in this reaction. This chain is tRNA N6-adenosine threonylcarbamoyltransferase, found in Rhodopseudomonas palustris (strain ATCC BAA-98 / CGA009).